The primary structure comprises 577 residues: Arginine--tRNA ligase (577 aa).

Positions 122 to 132 match the 'HIGH' region motif; the sequence is PNVAKEMHVGH.

It belongs to the class-I aminoacyl-tRNA synthetase family. In terms of assembly, monomer.

The protein resides in the cytoplasm. The enzyme catalyses tRNA(Arg) + L-arginine + ATP = L-arginyl-tRNA(Arg) + AMP + diphosphate. The polypeptide is Arginine--tRNA ligase (Edwardsiella ictaluri (strain 93-146)).